The primary structure comprises 445 residues: Gamma conglutin 2 (445 aa).

The first 33 residues, 1–33 (MAQNMAPIFHFIAISLSCSFLFVLSSSQDSQSL), serve as a signal peptide directing secretion. Residues 60–425 (HWANIHKRTP…DFAKSRVEFN (366 aa)) form the Peptidase A1 domain. 5 cysteine pairs are disulfide-bonded: C88-C178, C102-C115, C107-C133, C118-C128, and C346-C387. The N-linked (GlcNAc...) asparagine glycan is linked to N130.

It belongs to the peptidase A1 family. In terms of assembly, two-subunit monomeric unit made of alpha and beta subunits coupled by disulfide bonds (at pH 4.5 and under non-reducing conditions). Can also form oligomers including dimer, tetramer and cyclic hexamer (trimer of dimers) (at pH &gt; 5.5). Component of globulins complexes which accumulate in seeds. Interacts with flavonoids (e.g. apigenin glucosides) present in globulins complexes. Glycosylated on alpha chain.

It localises to the secreted. It is found in the extracellular space. In terms of biological role, sulfur-rich seed storage protein that remains undegraded at germination. This Lupinus angustifolius (Narrow-leaved blue lupine) protein is Gamma conglutin 2.